The chain runs to 134 residues: Small ribosomal subunit protein uS11 (134 aa).

The tract at residues 1-24 (MATKMAGVKRAGRKRKERKNIERG) is disordered.

The protein belongs to the universal ribosomal protein uS11 family. In terms of assembly, part of the 30S ribosomal subunit. Interacts with proteins S7 and S18. Binds to IF-3.

Located on the platform of the 30S subunit, it bridges several disparate RNA helices of the 16S rRNA. Forms part of the Shine-Dalgarno cleft in the 70S ribosome. The protein is Small ribosomal subunit protein uS11 of Acetivibrio thermocellus (strain ATCC 27405 / DSM 1237 / JCM 9322 / NBRC 103400 / NCIMB 10682 / NRRL B-4536 / VPI 7372) (Clostridium thermocellum).